Here is a 186-residue protein sequence, read N- to C-terminus: uncharacterized protein (186 aa).

Positions 1–21 (MIHVKYIILGFIMVSSLNLYA) are cleaved as a signal peptide.

This is an uncharacterized protein from Rickettsia conorii (strain ATCC VR-613 / Malish 7).